Consider the following 483-residue polypeptide: Serine hydroxymethyltransferase, cytosolic (483 aa).

Lys-257 is subject to N6-(pyridoxal phosphate)lysine.

The protein belongs to the SHMT family. In terms of assembly, homotetramer. Identified in complex with ABRAXAS2 and the other subunits of the BRISC complex, at least composed of ABRAXAS2, BRCC3/BRCC36, BABAM2 and BABAM1/NBA1. Requires pyridoxal 5'-phosphate as cofactor.

It localises to the cytoplasm. It catalyses the reaction (6R)-5,10-methylene-5,6,7,8-tetrahydrofolate + glycine + H2O = (6S)-5,6,7,8-tetrahydrofolate + L-serine. It functions in the pathway one-carbon metabolism; tetrahydrofolate interconversion. Functionally, interconversion of serine and glycine. The polypeptide is Serine hydroxymethyltransferase, cytosolic (SHMT1) (Pongo abelii (Sumatran orangutan)).